Here is a 339-residue protein sequence, read N- to C-terminus: Quinolinate synthase (339 aa).

Iminosuccinate contacts are provided by histidine 63 and serine 81. Cysteine 126 serves as a coordination point for [4Fe-4S] cluster. Iminosuccinate is bound by residues 152–154 (YVN) and serine 169. Position 211 (cysteine 211) interacts with [4Fe-4S] cluster. Iminosuccinate is bound by residues 237-239 (HPE) and threonine 254. Cysteine 297 lines the [4Fe-4S] cluster pocket.

This sequence belongs to the quinolinate synthase family. Type 2 subfamily. The cofactor is [4Fe-4S] cluster.

The protein localises to the cytoplasm. It catalyses the reaction iminosuccinate + dihydroxyacetone phosphate = quinolinate + phosphate + 2 H2O + H(+). The protein operates within cofactor biosynthesis; NAD(+) biosynthesis; quinolinate from iminoaspartate: step 1/1. Functionally, catalyzes the condensation of iminoaspartate with dihydroxyacetone phosphate to form quinolinate. The chain is Quinolinate synthase from Xylella fastidiosa (strain 9a5c).